A 337-amino-acid chain; its full sequence is MQSIPIKNVGESRLVDPFQRQYYYLRLSITDQCNFRCTYCLPDGYQPEANKPSFLTLKEIIHLAQAFAEMGTEKIRLTGGEPTLRKDFISIAESIANIDGIRQLAVTTNGYRMAKDVADWKQAGITSINVSVDSLDPKMFHQITGINKFDDVMRGIDRAFEVGYNKVKVNSVLMKNLNDKEFEQFLAWVKHRPIQMRFIELMQTGEMDSFFDRYHLSGQILADKLLKNGWTLQHKSHTDGPAKVFTHPDYAGEIGLIMPYEKNFCASCNRLRVSAKGKLHLCLFGEEGIELRDLLQSHEQQAILQARIFAALQGKREHHYLHIGDTGVRNHLASIGG.

The 227-residue stretch at 17-243 (PFQRQYYYLR…HKSHTDGPAK (227 aa)) folds into the Radical SAM core domain. Arg26 contacts GTP. Positions 33 and 37 each coordinate [4Fe-4S] cluster. An S-adenosyl-L-methionine-binding site is contributed by Tyr39. Cys40 provides a ligand contact to [4Fe-4S] cluster. Arg76 is a binding site for GTP. Gly80 is an S-adenosyl-L-methionine binding site. A GTP-binding site is contributed by Thr107. Residue Ser131 coordinates S-adenosyl-L-methionine. Lys168 is a binding site for GTP. Met202 contributes to the S-adenosyl-L-methionine binding site. [4Fe-4S] cluster contacts are provided by Cys265 and Cys268. 270–272 (RLR) provides a ligand contact to GTP. A [4Fe-4S] cluster-binding site is contributed by Cys282.

The protein belongs to the radical SAM superfamily. MoaA family. As to quaternary structure, monomer and homodimer. It depends on [4Fe-4S] cluster as a cofactor.

It carries out the reaction GTP + AH2 + S-adenosyl-L-methionine = (8S)-3',8-cyclo-7,8-dihydroguanosine 5'-triphosphate + 5'-deoxyadenosine + L-methionine + A + H(+). The protein operates within cofactor biosynthesis; molybdopterin biosynthesis. Functionally, catalyzes the cyclization of GTP to (8S)-3',8-cyclo-7,8-dihydroguanosine 5'-triphosphate. The protein is GTP 3',8-cyclase of Haemophilus influenzae (strain 86-028NP).